The following is a 365-amino-acid chain: Chorismate synthase (365 aa).

Arg-46 is an NADP(+) binding site. Residues 123 to 125 (RSS), 241 to 242 (NG), Gly-281, 296 to 300 (KPTPS), and Arg-322 each bind FMN.

It belongs to the chorismate synthase family. In terms of assembly, homotetramer. FMNH2 is required as a cofactor.

It catalyses the reaction 5-O-(1-carboxyvinyl)-3-phosphoshikimate = chorismate + phosphate. The protein operates within metabolic intermediate biosynthesis; chorismate biosynthesis; chorismate from D-erythrose 4-phosphate and phosphoenolpyruvate: step 7/7. Its function is as follows. Catalyzes the anti-1,4-elimination of the C-3 phosphate and the C-6 proR hydrogen from 5-enolpyruvylshikimate-3-phosphate (EPSP) to yield chorismate, which is the branch point compound that serves as the starting substrate for the three terminal pathways of aromatic amino acid biosynthesis. This reaction introduces a second double bond into the aromatic ring system. In Helicobacter pylori (strain ATCC 700392 / 26695) (Campylobacter pylori), this protein is Chorismate synthase.